The primary structure comprises 514 residues: Developmental and secondary metabolism regulator veA (514 aa).

The region spanning 26–218 (NRHLWYQLTV…ADQGCHVRIR (193 aa)) is the Velvet domain. The Nuclear localization signal signature appears at 40–45 (ERARAC). Residues 219-463 (RDVRMRKRDA…PIGSKRKHDQ (245 aa)) form a disordered region. The segment covering 228 to 243 (AKSNNGRDRREDDMAR) has biased composition (basic and acidic residues). Residues 256–267 (SAAARARSMSNS) are compositionally biased toward low complexity. A compositionally biased stretch (polar residues) spans 386-396 (SYPSTPVSSHP). Residues 411 to 448 (KSPSNSVSPSNSSLKITDLLVQPLPSSEPKLEVGSAPC) form a PEST region. The segment covering 412 to 423 (SPSNSVSPSNSS) has biased composition (low complexity).

It belongs to the velvet family. VeA subfamily. As to quaternary structure, component of the heterotrimeric velvet complex composed of laeA, veA and velB; VeA acting as a bridging protein between laeA and velB.

The protein resides in the nucleus. It localises to the cytoplasm. Component of the velvet transcription factor complex that controls sexual/asexual developmental ratio in response to light, promoting sexual development in the darkness while stimulating asexual sporulation under illumination. The velvet complex hat acts as a global regulator for secondary metabolite gene expression. Controls the expression of the cephalosporin C gene cluster. Regulates hyphal fragmentation. The sequence is that of Developmental and secondary metabolism regulator veA from Hapsidospora chrysogenum (strain ATCC 11550 / CBS 779.69 / DSM 880 / IAM 14645 / JCM 23072 / IMI 49137) (Acremonium chrysogenum).